The sequence spans 327 residues: Lipoyl synthase (327 aa).

Positions 72, 77, 83, 98, 102, 105, and 313 each coordinate [4Fe-4S] cluster. Residues 83–302 form the Radical SAM core domain; that stretch reads CWSHGTATIM…RRVGLEKGFL (220 aa).

This sequence belongs to the radical SAM superfamily. Lipoyl synthase family. [4Fe-4S] cluster is required as a cofactor.

The protein resides in the cytoplasm. It carries out the reaction [[Fe-S] cluster scaffold protein carrying a second [4Fe-4S](2+) cluster] + N(6)-octanoyl-L-lysyl-[protein] + 2 oxidized [2Fe-2S]-[ferredoxin] + 2 S-adenosyl-L-methionine + 4 H(+) = [[Fe-S] cluster scaffold protein] + N(6)-[(R)-dihydrolipoyl]-L-lysyl-[protein] + 4 Fe(3+) + 2 hydrogen sulfide + 2 5'-deoxyadenosine + 2 L-methionine + 2 reduced [2Fe-2S]-[ferredoxin]. Its pathway is protein modification; protein lipoylation via endogenous pathway; protein N(6)-(lipoyl)lysine from octanoyl-[acyl-carrier-protein]: step 2/2. In terms of biological role, catalyzes the radical-mediated insertion of two sulfur atoms into the C-6 and C-8 positions of the octanoyl moiety bound to the lipoyl domains of lipoate-dependent enzymes, thereby converting the octanoylated domains into lipoylated derivatives. In Francisella philomiragia subsp. philomiragia (strain ATCC 25017 / CCUG 19701 / FSC 153 / O#319-036), this protein is Lipoyl synthase.